The primary structure comprises 271 residues: Urease accessory protein UreD (271 aa).

This sequence belongs to the UreD family. In terms of assembly, ureD, UreF and UreG form a complex that acts as a GTP-hydrolysis-dependent molecular chaperone, activating the urease apoprotein by helping to assemble the nickel containing metallocenter of UreC. The UreE protein probably delivers the nickel.

It localises to the cytoplasm. In terms of biological role, required for maturation of urease via the functional incorporation of the urease nickel metallocenter. This Actinomyces naeslundii protein is Urease accessory protein UreD.